The sequence spans 323 residues: METVLTARDLTRHYEVSRGLFKGHAQVRALNGVSFELEAGKTLAVVGESGCGKSTLARALTLIEEPTSGSLKIAGQEVKGASKDQRRQLRRDVQMVFQNPYASLNPRQKIGDQLAEPLLINTALSREERREKVQQMMRQVGLRPEHYQRYPHMFSGGQRQRIALARAMMLQPKVLVADEPTSALDVSIQAQVLNLFMDLQQQFRTAYVFISHNLAVVRHVADDVLVMYLGRPAEMGPADKLYENPLHPYTRALLSATPAIHPDPTKPKIRIQGELPNPLHPPEGCAFHKRCPYATERCRSEVPELRLLDQRQVACHHAEQFLG.

An ABC transporter domain is found at 5-254; sequence LTARDLTRHY…PLHPYTRALL (250 aa). 47 to 54 provides a ligand contact to ATP; sequence GESGCGKS.

Belongs to the ABC transporter superfamily. The complex is composed of two ATP-binding proteins (DppD and DppF), two transmembrane proteins (DppB and DppC) and a solute-binding protein (DppA1-A5). Five orthologous SBPs (DppA1-A5) are present in P.aeruginosa, which increases the substrate specificity of the DppBCDF transporter.

It is found in the cell inner membrane. The enzyme catalyses a dipeptide(out) + ATP + H2O = a dipeptide(in) + ADP + phosphate + H(+). Functionally, part of the ABC transporter DppABCDF involved in the uptake of various di/tripeptides. Is also involved in the uptake of phaseolotoxin, a toxic tripeptide inhibiting the enzyme ornithine carbamoyltransferase. Responsible for energy coupling to the transport system. The polypeptide is Di/tripeptide transport ATP-binding protein DppF (Pseudomonas aeruginosa (strain UCBPP-PA14)).